The chain runs to 295 residues: ATP synthase gamma chain (295 aa).

It belongs to the ATPase gamma chain family. F-type ATPases have 2 components, CF(1) - the catalytic core - and CF(0) - the membrane proton channel. CF(1) has five subunits: alpha(3), beta(3), gamma(1), delta(1), epsilon(1). CF(0) has three main subunits: a, b and c.

The protein resides in the cell inner membrane. Produces ATP from ADP in the presence of a proton gradient across the membrane. The gamma chain is believed to be important in regulating ATPase activity and the flow of protons through the CF(0) complex. In Bdellovibrio bacteriovorus (strain ATCC 15356 / DSM 50701 / NCIMB 9529 / HD100), this protein is ATP synthase gamma chain.